The primary structure comprises 199 residues: 3-isopropylmalate dehydratase small subunit (199 aa).

It belongs to the LeuD family. LeuD type 1 subfamily. As to quaternary structure, heterodimer of LeuC and LeuD.

The enzyme catalyses (2R,3S)-3-isopropylmalate = (2S)-2-isopropylmalate. It participates in amino-acid biosynthesis; L-leucine biosynthesis; L-leucine from 3-methyl-2-oxobutanoate: step 2/4. Catalyzes the isomerization between 2-isopropylmalate and 3-isopropylmalate, via the formation of 2-isopropylmaleate. In Bacillus velezensis (strain DSM 23117 / BGSC 10A6 / LMG 26770 / FZB42) (Bacillus amyloliquefaciens subsp. plantarum), this protein is 3-isopropylmalate dehydratase small subunit.